We begin with the raw amino-acid sequence, 204 residues long: Guanylate kinase (204 aa).

The Guanylate kinase-like domain occupies 3–181; it reads GTLIIITAPS…ALDDLVAVVR (179 aa). 10–17 contributes to the ATP binding site; that stretch reads APSGAGKT.

It belongs to the guanylate kinase family.

The protein localises to the cytoplasm. The catalysed reaction is GMP + ATP = GDP + ADP. In terms of biological role, essential for recycling GMP and indirectly, cGMP. The sequence is that of Guanylate kinase from Aromatoleum aromaticum (strain DSM 19018 / LMG 30748 / EbN1) (Azoarcus sp. (strain EbN1)).